We begin with the raw amino-acid sequence, 273 residues long: Glutamate racemase (273 aa).

Residues 9-10 (DS) and 41-42 (YG) each bind substrate. The Proton donor/acceptor role is filled by cysteine 73. A substrate-binding site is contributed by 74–75 (NT). The active-site Proton donor/acceptor is the cysteine 183. A substrate-binding site is contributed by 184–185 (TH).

The protein belongs to the aspartate/glutamate racemases family.

The enzyme catalyses L-glutamate = D-glutamate. It participates in cell wall biogenesis; peptidoglycan biosynthesis. Its function is as follows. Provides the (R)-glutamate required for cell wall biosynthesis. This Shewanella oneidensis (strain ATCC 700550 / JCM 31522 / CIP 106686 / LMG 19005 / NCIMB 14063 / MR-1) protein is Glutamate racemase.